The following is a 79-amino-acid chain: Small ribosomal subunit protein bS18 (79 aa).

This sequence belongs to the bacterial ribosomal protein bS18 family. As to quaternary structure, part of the 30S ribosomal subunit. Forms a tight heterodimer with protein bS6.

Functionally, binds as a heterodimer with protein bS6 to the central domain of the 16S rRNA, where it helps stabilize the platform of the 30S subunit. In Latilactobacillus sakei subsp. sakei (strain 23K) (Lactobacillus sakei subsp. sakei), this protein is Small ribosomal subunit protein bS18.